The primary structure comprises 206 residues: MKFDKHMLRKYFIMGSQNCHRDPREILKEAASAGITAFQYREKGKNSLTGTAKVELAKDLKAICHDFQIPFIINDDVDLAKQLDADGIHIGQDDQPVEVVRKQFPNKIIGLSISTNNELNQSPLDLVDYIGVGPIFDTNTKEDAKTAVGLEWIQSLKKQHPSLPLVAIGGINTTNAQEIIQAGADGVSFISAITETDHILQAVQRL.

Residues 39–43 (QYREK) and Asn74 each bind 4-amino-2-methyl-5-(diphosphooxymethyl)pyrimidine. Residues Asp75 and Asp94 each contribute to the Mg(2+) site. Ser112 is a 4-amino-2-methyl-5-(diphosphooxymethyl)pyrimidine binding site. 138–140 (TNT) contacts 2-[(2R,5Z)-2-carboxy-4-methylthiazol-5(2H)-ylidene]ethyl phosphate. Lys141 lines the 4-amino-2-methyl-5-(diphosphooxymethyl)pyrimidine pocket. 2-[(2R,5Z)-2-carboxy-4-methylthiazol-5(2H)-ylidene]ethyl phosphate contacts are provided by residues Gly170 and 190 to 191 (IS).

Belongs to the thiamine-phosphate synthase family. The cofactor is Mg(2+).

It carries out the reaction 2-[(2R,5Z)-2-carboxy-4-methylthiazol-5(2H)-ylidene]ethyl phosphate + 4-amino-2-methyl-5-(diphosphooxymethyl)pyrimidine + 2 H(+) = thiamine phosphate + CO2 + diphosphate. It catalyses the reaction 2-(2-carboxy-4-methylthiazol-5-yl)ethyl phosphate + 4-amino-2-methyl-5-(diphosphooxymethyl)pyrimidine + 2 H(+) = thiamine phosphate + CO2 + diphosphate. The catalysed reaction is 4-methyl-5-(2-phosphooxyethyl)-thiazole + 4-amino-2-methyl-5-(diphosphooxymethyl)pyrimidine + H(+) = thiamine phosphate + diphosphate. It participates in cofactor biosynthesis; thiamine diphosphate biosynthesis; thiamine phosphate from 4-amino-2-methyl-5-diphosphomethylpyrimidine and 4-methyl-5-(2-phosphoethyl)-thiazole: step 1/1. Its function is as follows. Condenses 4-methyl-5-(beta-hydroxyethyl)thiazole monophosphate (THZ-P) and 2-methyl-4-amino-5-hydroxymethyl pyrimidine pyrophosphate (HMP-PP) to form thiamine monophosphate (TMP). The protein is Thiamine-phosphate synthase of Oceanobacillus iheyensis (strain DSM 14371 / CIP 107618 / JCM 11309 / KCTC 3954 / HTE831).